Here is a 99-residue protein sequence, read N- to C-terminus: Large ribosomal subunit protein eL36A (99 aa).

Belongs to the eukaryotic ribosomal protein eL36 family. Component of the large ribosomal subunit (LSU). Mature yeast ribosomes consist of a small (40S) and a large (60S) subunit. The 40S small subunit contains 1 molecule of ribosomal RNA (18S rRNA) and at least 33 different proteins. The large 60S subunit contains 3 rRNA molecules (25S, 5.8S and 5S rRNA) and at least 46 different proteins.

It localises to the cytoplasm. Component of the ribosome, a large ribonucleoprotein complex responsible for the synthesis of proteins in the cell. The small ribosomal subunit (SSU) binds messenger RNAs (mRNAs) and translates the encoded message by selecting cognate aminoacyl-transfer RNA (tRNA) molecules. The large subunit (LSU) contains the ribosomal catalytic site termed the peptidyl transferase center (PTC), which catalyzes the formation of peptide bonds, thereby polymerizing the amino acids delivered by tRNAs into a polypeptide chain. The nascent polypeptides leave the ribosome through a tunnel in the LSU and interact with protein factors that function in enzymatic processing, targeting, and the membrane insertion of nascent chains at the exit of the ribosomal tunnel. The protein is Large ribosomal subunit protein eL36A (rpl3601) of Schizosaccharomyces pombe (strain 972 / ATCC 24843) (Fission yeast).